We begin with the raw amino-acid sequence, 463 residues long: ATP synthase subunit beta (463 aa).

152 to 159 (GGAGVGKT) provides a ligand contact to ATP.

The protein belongs to the ATPase alpha/beta chains family. F-type ATPases have 2 components, CF(1) - the catalytic core - and CF(0) - the membrane proton channel. CF(1) has five subunits: alpha(3), beta(3), gamma(1), delta(1), epsilon(1). CF(0) has three main subunits: a(1), b(2) and c(9-12). The alpha and beta chains form an alternating ring which encloses part of the gamma chain. CF(1) is attached to CF(0) by a central stalk formed by the gamma and epsilon chains, while a peripheral stalk is formed by the delta and b chains.

Its subcellular location is the cell inner membrane. The enzyme catalyses ATP + H2O + 4 H(+)(in) = ADP + phosphate + 5 H(+)(out). Its function is as follows. Produces ATP from ADP in the presence of a proton gradient across the membrane. The catalytic sites are hosted primarily by the beta subunits. This chain is ATP synthase subunit beta, found in Shewanella sp. (strain MR-7).